Reading from the N-terminus, the 138-residue chain is MEQTFFMIKPDGVKRGFIGEVISRIERRGFSIDRLEVRYADADILKRHYAELTDRPFFPTLVDYMTSGPVIIGVISGEEVISTWRTMMGSTNPKDALPGTIRGDFAQAPSPNQATCNIVHGSDSPESATREIAIWFNN.

Positions 9, 57, 85, 91, 102, and 112 each coordinate ATP. Histidine 120 (pros-phosphohistidine intermediate) is an active-site residue.

The protein belongs to the NDK family. In terms of assembly, homotetramer. The cofactor is Mg(2+).

It is found in the cytoplasm. The catalysed reaction is a 2'-deoxyribonucleoside 5'-diphosphate + ATP = a 2'-deoxyribonucleoside 5'-triphosphate + ADP. The enzyme catalyses a ribonucleoside 5'-diphosphate + ATP = a ribonucleoside 5'-triphosphate + ADP. Major role in the synthesis of nucleoside triphosphates other than ATP. The ATP gamma phosphate is transferred to the NDP beta phosphate via a ping-pong mechanism, using a phosphorylated active-site intermediate. The protein is Nucleoside diphosphate kinase of Streptococcus agalactiae serotype V (strain ATCC BAA-611 / 2603 V/R).